We begin with the raw amino-acid sequence, 80 residues long: Phosphoribosylformylglycinamidine synthase subunit PurS (80 aa).

The protein belongs to the PurS family. In terms of assembly, homodimer. Part of the FGAM synthase complex composed of 1 PurL, 1 PurQ and 2 PurS subunits.

It localises to the cytoplasm. The catalysed reaction is N(2)-formyl-N(1)-(5-phospho-beta-D-ribosyl)glycinamide + L-glutamine + ATP + H2O = 2-formamido-N(1)-(5-O-phospho-beta-D-ribosyl)acetamidine + L-glutamate + ADP + phosphate + H(+). It participates in purine metabolism; IMP biosynthesis via de novo pathway; 5-amino-1-(5-phospho-D-ribosyl)imidazole from N(2)-formyl-N(1)-(5-phospho-D-ribosyl)glycinamide: step 1/2. Its function is as follows. Part of the phosphoribosylformylglycinamidine synthase complex involved in the purines biosynthetic pathway. Catalyzes the ATP-dependent conversion of formylglycinamide ribonucleotide (FGAR) and glutamine to yield formylglycinamidine ribonucleotide (FGAM) and glutamate. The FGAM synthase complex is composed of three subunits. PurQ produces an ammonia molecule by converting glutamine to glutamate. PurL transfers the ammonia molecule to FGAR to form FGAM in an ATP-dependent manner. PurS interacts with PurQ and PurL and is thought to assist in the transfer of the ammonia molecule from PurQ to PurL. This is Phosphoribosylformylglycinamidine synthase subunit PurS from Archaeoglobus fulgidus (strain ATCC 49558 / DSM 4304 / JCM 9628 / NBRC 100126 / VC-16).